A 298-amino-acid polypeptide reads, in one-letter code: Lipoyl synthase (298 aa).

Positions 43, 48, 54, 69, 73, 76, and 280 each coordinate [4Fe-4S] cluster. Positions 55-269 constitute a Radical SAM core domain; that stretch reads FSSGTATFLI…AACGRGMGIP (215 aa).

The protein belongs to the radical SAM superfamily. Lipoyl synthase family. Requires [4Fe-4S] cluster as cofactor.

The protein resides in the cytoplasm. It catalyses the reaction [[Fe-S] cluster scaffold protein carrying a second [4Fe-4S](2+) cluster] + N(6)-octanoyl-L-lysyl-[protein] + 2 oxidized [2Fe-2S]-[ferredoxin] + 2 S-adenosyl-L-methionine + 4 H(+) = [[Fe-S] cluster scaffold protein] + N(6)-[(R)-dihydrolipoyl]-L-lysyl-[protein] + 4 Fe(3+) + 2 hydrogen sulfide + 2 5'-deoxyadenosine + 2 L-methionine + 2 reduced [2Fe-2S]-[ferredoxin]. It participates in protein modification; protein lipoylation via endogenous pathway; protein N(6)-(lipoyl)lysine from octanoyl-[acyl-carrier-protein]: step 2/2. Catalyzes the radical-mediated insertion of two sulfur atoms into the C-6 and C-8 positions of the octanoyl moiety bound to the lipoyl domains of lipoate-dependent enzymes, thereby converting the octanoylated domains into lipoylated derivatives. In Nitratidesulfovibrio vulgaris (strain ATCC 29579 / DSM 644 / CCUG 34227 / NCIMB 8303 / VKM B-1760 / Hildenborough) (Desulfovibrio vulgaris), this protein is Lipoyl synthase.